The primary structure comprises 466 residues: Asparagine--tRNA ligase (466 aa).

Belongs to the class-II aminoacyl-tRNA synthetase family. As to quaternary structure, homodimer.

The protein resides in the cytoplasm. It catalyses the reaction tRNA(Asn) + L-asparagine + ATP = L-asparaginyl-tRNA(Asn) + AMP + diphosphate + H(+). In Shewanella baltica (strain OS185), this protein is Asparagine--tRNA ligase.